Consider the following 271-residue polypeptide: Beta-lysine N(6)-acetyltransferase (271 aa).

The segment at 86–122 (LRKDRGTGKNQKKKKISRKKDNWKKRKEKSRLPEGYT) is disordered. A compositionally biased stretch (basic residues) spans 95–114 (NQKKKKISRKKDNWKKRKEK). The 149-residue stretch at 121–269 (YTLRPAVQAD…GFEDMNIWCR (149 aa)) folds into the N-acetyltransferase domain.

The protein belongs to the acetyltransferase family.

It carries out the reaction (3S)-3,6-diaminohexanoate + acetyl-CoA = (3S)-6-acetamido-3-aminohexanoate + CoA + H(+). Its function is as follows. Catalyzes the acetylation of beta-lysine to N6-acetyl-beta-lysine, a compatible solute produced by methanogenic archaea that helps cells to cope with salt stress. The sequence is that of Beta-lysine N(6)-acetyltransferase from Methanosarcina mazei (strain ATCC BAA-159 / DSM 3647 / Goe1 / Go1 / JCM 11833 / OCM 88) (Methanosarcina frisia).